Consider the following 725-residue polypeptide: Probable alpha-galactosidase G (725 aa).

A glycan (N-linked (GlcNAc...) asparagine) is linked at asparagine 407. Aspartate 484 (nucleophile) is an active-site residue. N-linked (GlcNAc...) asparagine glycosylation is present at asparagine 490. The Proton donor role is filled by aspartate 546. The N-linked (GlcNAc...) asparagine glycan is linked to asparagine 672.

This sequence belongs to the glycosyl hydrolase 36 family. As to quaternary structure, homotetramer. Requires Mg(2+) as cofactor. It depends on NAD(+) as a cofactor.

It is found in the secreted. It carries out the reaction Hydrolysis of terminal, non-reducing alpha-D-galactose residues in alpha-D-galactosides, including galactose oligosaccharides, galactomannans and galactolipids.. Hydrolyzes a variety of simple alpha-D-galactoside as well as more complex molecules such as oligosaccharides and polysaccharides. The protein is Probable alpha-galactosidase G (aglG) of Aspergillus terreus (strain NIH 2624 / FGSC A1156).